A 498-amino-acid chain; its full sequence is XK-related protein 4 (498 aa).

A disordered region spans residues 24–46 (SEHSGSVQGLHPGAQPDSAGAGD). A run of 2 helical transmembrane segments spans residues 81–101 (CLWIVAAVAVYVADVGSDVWL) and 111–131 (YWWFGLTLFFVVLGSFSVQLF). The segment at 166–203 (SHGDVTAQHHPATPQRQASTASRNTTTNSTASTGLGPR) is disordered. Over residues 183-198 (ASTASRNTTTNSTAST) the composition is skewed to low complexity. 2 consecutive transmembrane segments (helical) span residues 302–322 (LFIYYLLILAENAALSALWYL) and 332–352 (FAVPALCVIFSSFLTGVVFML).

Belongs to the XK family.

It is found in the cell membrane. The enzyme catalyses a 1,2-diacyl-sn-glycero-3-phospho-L-serine(in) = a 1,2-diacyl-sn-glycero-3-phospho-L-serine(out). Functionally, phospholipid scramblase that promotes phosphatidylserine exposure on apoptotic cell surface. Phosphatidylserine is a specific marker only present at the surface of apoptotic cells and acts as a specific signal for engulfment. The sequence is that of XK-related protein 4 from Tetraodon nigroviridis (Spotted green pufferfish).